Here is a 605-residue protein sequence, read N- to C-terminus: DNA mismatch repair protein MutL (605 aa).

This sequence belongs to the DNA mismatch repair MutL/HexB family.

This protein is involved in the repair of mismatches in DNA. It is required for dam-dependent methyl-directed DNA mismatch repair. May act as a 'molecular matchmaker', a protein that promotes the formation of a stable complex between two or more DNA-binding proteins in an ATP-dependent manner without itself being part of a final effector complex. This is DNA mismatch repair protein MutL from Rhizobium meliloti (strain 1021) (Ensifer meliloti).